The following is a 249-amino-acid chain: tRNA (guanine-N(1)-)-methyltransferase (249 aa).

Residues Gly117 and 137-142 each bind S-adenosyl-L-methionine; that span reads LGDFVL.

The protein belongs to the RNA methyltransferase TrmD family. In terms of assembly, homodimer.

The protein localises to the cytoplasm. It carries out the reaction guanosine(37) in tRNA + S-adenosyl-L-methionine = N(1)-methylguanosine(37) in tRNA + S-adenosyl-L-homocysteine + H(+). In terms of biological role, specifically methylates guanosine-37 in various tRNAs. The chain is tRNA (guanine-N(1)-)-methyltransferase from Janthinobacterium sp. (strain Marseille) (Minibacterium massiliensis).